The following is a 29-amino-acid chain: Photosystem I reaction center subunit XII (29 aa).

Residues 7 to 26 (IFVALILALFSFVLAIRLGT) traverse the membrane as a helical segment.

It belongs to the PsaM family.

It is found in the plastid. The protein resides in the chloroplast thylakoid membrane. The polypeptide is Photosystem I reaction center subunit XII (Guillardia theta (Cryptophyte)).